Here is a 238-residue protein sequence, read N- to C-terminus: Small ribosomal subunit protein eS4 (238 aa).

The region spanning Ile38–Pro109 is the S4 RNA-binding domain.

It belongs to the eukaryotic ribosomal protein eS4 family.

This is Small ribosomal subunit protein eS4 from Pyrobaculum neutrophilum (strain DSM 2338 / JCM 9278 / NBRC 100436 / V24Sta) (Thermoproteus neutrophilus).